Here is a 466-residue protein sequence, read N- to C-terminus: Asparagine--tRNA ligase (466 aa).

It belongs to the class-II aminoacyl-tRNA synthetase family. Homodimer.

The protein resides in the cytoplasm. It carries out the reaction tRNA(Asn) + L-asparagine + ATP = L-asparaginyl-tRNA(Asn) + AMP + diphosphate + H(+). The polypeptide is Asparagine--tRNA ligase (Shewanella baltica (strain OS185)).